The sequence spans 1923 residues: Endoribonuclease Dicer (1923 aa).

The Helicase ATP-binding domain occupies 51-227; it reads LLEAALDHNT…ELEEKIQKLE (177 aa). 64 to 71 lines the ATP pocket; it reads LNTGSGKT. The DECH box motif lies at 175–178; the sequence is DECH. The interval 256-595 is required for interaction with PRKRA and TARBP2; that stretch reads DCGPFTDRSG…LRNKCSKSVD (340 aa). Residues 410–433 form a disordered region; it reads VSWSDSEDDEEDEEIEEKEKPETN. A phosphoserine mark is found at S413 and S415. Acidic residues predominate over residues 414-425; sequence DSEDDEEDEEIE. The Helicase C-terminal domain occupies 433 to 602; sequence NFPSPFTNIL…SVDTGEADTE (170 aa). The Dicer dsRNA-binding fold domain maps to 629–721; sequence AIGHVNRYCA…MPVGKETVKY (93 aa). A PAZ domain is found at 894–1041; it reads KFMEDIEKSE…LVPELCAIHP (148 aa). 2 positions are modified to phosphoserine: S1015 and S1160. Composition is skewed to polar residues over residues 1246–1255 and 1277–1290; these read NANTSTSDGS and SEQS…SRTL. Residues 1246-1291 form a disordered region; it reads NANTSTSDGSPVTAAVPGTTETGEAPPDRTASEQSPSPGYSSRTLG. Residues 1276–1404 enclose the RNase III 1 domain; sequence ASEQSPSPGY…TEKWEKDEMT (129 aa). Mg(2+) is bound by residues E1316, E1396, and E1399. Residues S1461, S1469, and S1471 each carry the phosphoserine modification. The 159-residue stretch at 1667–1825 folds into the RNase III 2 domain; that stretch reads FENFEKKINY…LAGAIYMDSG (159 aa). Mg(2+)-binding residues include E1706, D1811, and E1814. Positions 1853-1915 constitute a DRBM domain; sequence SPVRELLEME…ARRALRSLKA (63 aa). Residue S1869 is modified to Phosphoserine.

It belongs to the helicase family. Dicer subfamily. In terms of assembly, component of the RISC loading complex (RLC), or micro-RNA (miRNA) loading complex (miRLC), which is composed of DICER1, AGO2 and TARBP2; DICER1 and TARBP2 are required to process precursor miRNAs (pre-miRNAs) to mature miRNAs and then load them onto AGO2. Note that the trimeric RLC/miRLC is also referred to as RISC. Interacts with DHX9, AGO1, PIWIL1 and PRKRA. Interacts with AGO2, TARBP2, EIF6, MOV10 and RPL7A (60S ribosome subunit); they form a large RNA-induced silencing complex (RISC). Interacts with BCDIN3D. Interacts (via Dicer dsRNA-binding fold domain) with ALOX5 (via PLAT domain); this interaction enhances arachidonate 5-lipoxygenase activity and modifies the miRNA precursor processing activity of DICER1. It depends on Mg(2+) as a cofactor. Mn(2+) is required as a cofactor.

Its subcellular location is the cytoplasm. It carries out the reaction Endonucleolytic cleavage to 5'-phosphomonoester.. In terms of biological role, double-stranded RNA (dsRNA) endoribonuclease playing a central role in short dsRNA-mediated post-transcriptional gene silencing. Cleaves naturally occurring long dsRNAs and short hairpin pre-microRNAs (miRNA) into fragments of twenty-one to twenty-three nucleotides with 3' overhang of two nucleotides, producing respectively short interfering RNAs (siRNA) and mature microRNAs. SiRNAs and miRNAs serve as guide to direct the RNA-induced silencing complex (RISC) to complementary RNAs to degrade them or prevent their translation. Gene silencing mediated by siRNAs, also called RNA interference, controls the elimination of transcripts from mobile and repetitive DNA elements of the genome but also the degradation of exogenous RNA of viral origin for instance. The miRNA pathway on the other side is a mean to specifically regulate the expression of target genes. The chain is Endoribonuclease Dicer (DICER1) from Bos taurus (Bovine).